The sequence spans 100 residues: NAD(P)H-quinone oxidoreductase subunit 4L, chloroplastic (100 aa).

3 helical membrane passes run 1 to 21 (MFGHALLLGAFPFCIGIYGLI), 29 to 49 (ALMCLELIFNAVNVNFVTFPN), and 63 to 83 (VFVIAVAAAEAAIGSAIVLAI).

This sequence belongs to the complex I subunit 4L family. As to quaternary structure, NDH is composed of at least 16 different subunits, 5 of which are encoded in the nucleus.

Its subcellular location is the plastid. The protein localises to the chloroplast thylakoid membrane. It carries out the reaction a plastoquinone + NADH + (n+1) H(+)(in) = a plastoquinol + NAD(+) + n H(+)(out). It catalyses the reaction a plastoquinone + NADPH + (n+1) H(+)(in) = a plastoquinol + NADP(+) + n H(+)(out). Its function is as follows. NDH shuttles electrons from NAD(P)H:plastoquinone, via FMN and iron-sulfur (Fe-S) centers, to quinones in the photosynthetic chain and possibly in a chloroplast respiratory chain. The immediate electron acceptor for the enzyme in this species is believed to be plastoquinone. Couples the redox reaction to proton translocation, and thus conserves the redox energy in a proton gradient. The chain is NAD(P)H-quinone oxidoreductase subunit 4L, chloroplastic from Huperzia lucidula (Shining clubmoss).